Here is a 471-residue protein sequence, read N- to C-terminus: Ubiquitin carboxyl-terminal hydrolase calypso (471 aa).

Positions 45–276 constitute a UCH catalytic domain; the sequence is GWLELESDPG…IRFNLMAVVP (232 aa). C131 functions as the Nucleophile in the catalytic mechanism. The Proton donor role is filled by H213. The ULD domain maps to 375 to 403; sequence NYDKFICTFLSMLAHQGVLGELVSQHLLP. The positively charged C-terminal tail required for binding nucleosomes stretch occupies residues 405–471; sequence KKVSGQGAAN…KGRNKCRKRK (67 aa). The interval 410–471 is disordered; that stretch reads QGAANRISKQ…KGRNKCRKRK (62 aa). The span at 420 to 447 shows a compositional bias: low complexity; the sequence is STTASAGGSTTGATASTPKTQQQQAAAA. A compositionally biased stretch (basic residues) spans 457–471; it reads PGRRRKGRNKCRKRK.

Belongs to the peptidase C12 family. BAP1 subfamily. Catalytic component of the polycomb repressive deubiquitinase (PR-DUB) complex, at least composed of caly/calypso, Asx and sba (MBD5/6 homolog). The PR-DUB complex associates with nucleosomes to mediate deubiquitination of histone H2AK118ub1 substrates; the association requires the positively charged C-terminal tail of caly, probably due to direct binding of DNA. Interacts (via ULD domain) with Asx (via DEUBAD domain); the interaction produces a stable heterodimer with a composite binding site for ubiquitin. Homodimerizes (via coiled-coil hinge-region between the UCH and ULD domains) to mediate assembly of 2 copies of the caly-Asx heterodimer into a bisymmetric tetramer; dimerization enhances PR-DUB association with nucleosomes.

The protein resides in the nucleus. It catalyses the reaction Thiol-dependent hydrolysis of ester, thioester, amide, peptide and isopeptide bonds formed by the C-terminal Gly of ubiquitin (a 76-residue protein attached to proteins as an intracellular targeting signal).. In terms of biological role, catalytic component of the polycomb repressive deubiquitinase (PR-DUB) complex, a complex that specifically mediates deubiquitination of histone H2A monoubiquitinated at 'Lys-119' (H2AK118ub1). Mediates bisymmetric organization of the PR-DUB complex and is involved in association with nucleosomes to mediate deubiquitination. Does not deubiquitinate monoubiquitinated histone H2B. Required to maintain the transcriptionally repressive state of homeotic genes throughout development. The PR-DUB complex has weak or no activity toward 'Lys-48'- and 'Lys-63'-linked polyubiquitin chains. Polycomb group (PcG) protein. The protein is Ubiquitin carboxyl-terminal hydrolase calypso of Drosophila yakuba (Fruit fly).